A 169-amino-acid chain; its full sequence is Nucleoside diphosphate kinase 3 (169 aa).

ADP contacts are provided by Lys-29, Arg-105, Thr-111, Arg-122, Val-129, and Asn-132. His-135 serves as the catalytic Pros-phosphohistidine intermediate.

It belongs to the NDK family. As to quaternary structure, homohexamer. Interacts (via its N-terminal region) with KAT5; this interaction enables recruitment of NME3 at DNA damage sites where it plays a role in the repair of DNA. Found in association with several ciliary nephronophthisis proteins, including NEK8, CEP164, ANKS6. Mg(2+) is required as a cofactor.

The protein localises to the mitochondrion outer membrane. It localises to the cytoplasm. It is found in the cytoskeleton. The protein resides in the cilium basal body. The enzyme catalyses a 2'-deoxyribonucleoside 5'-diphosphate + ATP = a 2'-deoxyribonucleoside 5'-triphosphate + ADP. It catalyses the reaction a ribonucleoside 5'-diphosphate + ATP = a ribonucleoside 5'-triphosphate + ADP. Its function is as follows. Catalyzes the phosphorylation of ribonucleosides and deoxyribonucleoside diphosphates, other than ATP, into the corresponding triphosphates with ATP as the major phosphate donor. The ATP gamma phosphate is transferred to the nucleoside diphosphate beta phosphate via a ping-pong mechanism, using a phosphorylated active-site intermediate. Through the catalyzed exchange of gamma-phosphate between di- and triphosphonucleosides participates in regulation of intracellular nucleotide homeostasis. Inhibits granulocyte differentiation. May be required for ciliary function during renal development. In terms of biological role, independently of its kinase activity, facilitates mitochondrial tethering prior to membrane fusion through its direct membrane-binding and hexamerization. Implicated in repair of both single- and double-stranded breaks in DNA through its association with the ribonucleotide reductase complex (RNR complex) via its interaction with the histone acetyltransferase KAT5, this interaction enables recruitment of NME3 at DNA damage sites where it plays a role in the repair of DNA, independently of its kinase activity. This Homo sapiens (Human) protein is Nucleoside diphosphate kinase 3.